A 612-amino-acid chain; its full sequence is GPI mannosyltransferase 3 (612 aa).

Helical transmembrane passes span 92 to 112 (LLAIASKEALSIICSIGAGLM) and 145 to 165 (VIYAPKLFMALLAATGEYFTI). Asparagine 188 is a glycosylation site (N-linked (GlcNAc...) asparagine). 3 consecutive transmembrane segments (helical) span residues 192–212 (IALLLTLTNFFNCFFITRTFI), 254–274 (RPSNAIIWIVLGFFLTINLLL), and 288–308 (ILVVFTITMLVNVVIDFYFYN). A glycan (N-linked (GlcNAc...) asparagine) is linked at asparagine 321. Residues 339 to 359 (LLQSLPIMLGYSLPLFIYGLF) form a helical membrane-spanning segment. Asparagine 361 carries N-linked (GlcNAc...) asparagine glycosylation. 3 helical membrane passes run 371-391 (FGALRQIKFVLILNIIFYSYL), 398-418 (FIYPLQPLFCLLSALGALKLA), and 429-449 (EYVWIIPLMSMIVSIFITTFQ). Residues asparagine 508, asparagine 526, and asparagine 550 are each glycosylated (N-linked (GlcNAc...) asparagine).

It belongs to the glycosyltransferase 22 family. PIGB subfamily.

The protein localises to the endoplasmic reticulum membrane. It participates in glycolipid biosynthesis; glycosylphosphatidylinositol-anchor biosynthesis. Functionally, mannosyltransferase involved in glycosylphosphatidylinositol-anchor biosynthesis. Transfers the third mannose to Man2-GlcN-acyl-PI during GPI precursor assembly. The chain is GPI mannosyltransferase 3 (GPI10) from Candida glabrata (strain ATCC 2001 / BCRC 20586 / JCM 3761 / NBRC 0622 / NRRL Y-65 / CBS 138) (Yeast).